We begin with the raw amino-acid sequence, 299 residues long: Protein NSG2 (299 aa).

Residues 1–108 (MANRGEPDPK…PSRTRQTRQN (108 aa)) are Cytoplasmic-facing. S90 carries the post-translational modification Phosphoserine. The chain crosses the membrane as a helical span at residues 109-129 (ILHYLQAVLILSLSGFAYHEL). Topologically, residues 130 to 161 (SRNLHDNHLLHPDFASRPLLLGVKLCNWLSNG) are lumenal. A helical membrane pass occupies residues 162-182 (VLPNWLGYGVEGLLFGSVVPI). The Cytoplasmic segment spans residues 183-237 (LDNIFQTEVVKSSVHHDSLTSVIRSINAMLGVTFGIRKIQWNSSLQAAGAWGLLN). Residues 238–258 (IILWLFFDGSISMLMSCICIG) traverse the membrane as a helical segment. The Lumenal portion of the chain corresponds to 259 to 268 (VGCCISCYKD). A helical membrane pass occupies residues 269-289 (IIDGSQFLYFMDFYFLGSLMF). Over 290–299 (GKLGRYLYSH) the chain is Cytoplasmic.

Belongs to the INSIG family.

The protein resides in the endoplasmic reticulum membrane. In terms of biological role, stabilizes the HMG-CoA reductase HMG2 by preventing its HRD1-dependent degradation. Binds directly to the sterol-sensing domain (SSD)-containing transmembrane region of HMG2, promoting its folding to protect it from degradation. This is Protein NSG2 (NSG2) from Saccharomyces cerevisiae (strain ATCC 204508 / S288c) (Baker's yeast).